The following is a 273-amino-acid chain: 4-hydroxy-tetrahydrodipicolinate reductase (273 aa).

NAD(+) contacts are provided by residues 12 to 17 (GAGGRM) and glutamate 38. Arginine 39 is an NADP(+) binding site. NAD(+)-binding positions include 102–104 (GTT) and 126–129 (AANF). Histidine 159 (proton donor/acceptor) is an active-site residue. A (S)-2,3,4,5-tetrahydrodipicolinate-binding site is contributed by histidine 160. Catalysis depends on lysine 163, which acts as the Proton donor. 169–170 (GT) is a (S)-2,3,4,5-tetrahydrodipicolinate binding site.

The protein belongs to the DapB family. As to quaternary structure, homotetramer.

The protein localises to the cytoplasm. The catalysed reaction is (S)-2,3,4,5-tetrahydrodipicolinate + NAD(+) + H2O = (2S,4S)-4-hydroxy-2,3,4,5-tetrahydrodipicolinate + NADH + H(+). It carries out the reaction (S)-2,3,4,5-tetrahydrodipicolinate + NADP(+) + H2O = (2S,4S)-4-hydroxy-2,3,4,5-tetrahydrodipicolinate + NADPH + H(+). It functions in the pathway amino-acid biosynthesis; L-lysine biosynthesis via DAP pathway; (S)-tetrahydrodipicolinate from L-aspartate: step 4/4. Functionally, catalyzes the conversion of 4-hydroxy-tetrahydrodipicolinate (HTPA) to tetrahydrodipicolinate. The sequence is that of 4-hydroxy-tetrahydrodipicolinate reductase from Escherichia coli O127:H6 (strain E2348/69 / EPEC).